The chain runs to 449 residues: Sensor histidine protein kinase/phosphatase WalK (449 aa).

Topologically, residues 1–13 are extracellular; it reads MLDLLKQTIFTRD. Residues 14–34 traverse the membrane as a helical segment; sequence FIFILILLGFILVVTLLLLEN. Positions 35-87 constitute an HAMP domain; sequence RRDNIQLKQINQKVKDLIAGDYSKVLDMQGGSEITNITNNLNDLSEVIRLTQE. Residues 35–449 are Cytoplasmic-facing; it reads RRDNIQLKQI…EEVWEDEVED (415 aa). In terms of domain architecture, PAS spans 92–158; the sequence is ESKRLNSILF…YELRDLITQS (67 aa). The PAC domain maps to 157-211; sequence QSPELLLDSQDINGEYLNLRVRFALIRRESGFISGLVAVLHDTTEQEKEERERRL. One can recognise a Histidine kinase domain in the interval 215–435; that stretch reads NVSHELRTPL…TFTIVLPYDK (221 aa). The residue at position 218 (His-218) is a Phosphohistidine.

As to quaternary structure, may form homodimers. May interact with serine/threonine-protein kinase StkP; the interaction may play a role in regulating Walk signal transduction. Post-translationally, autophosphorylated.

The protein localises to the membrane. It catalyses the reaction ATP + protein L-histidine = ADP + protein N-phospho-L-histidine.. Functionally, member of the two-component regulatory system WalK/WalR that regulates genes involved in cell wall metabolism. Functions as a sensor protein kinase which is autophosphorylated at a histidine residue and transfers its phosphate group to WalR. In turn, WalR binds to the upstream promoter regions of target genes to positively and negatively regulate their expression. Required to maintain expression of WalRK regulon genes in exponentially growing cells, including peptidoglycan hydrolase pcsB. Phosphorylates WalR and also capable of dephosphorylation of WalR. WalK phosphatase activity is probably involved in preventing cross-talk from PnpS and other non-cognate sensor kinases during exponential growth. May be considered a potential virulence factor. This Streptococcus pneumoniae serotype 2 (strain D39 / NCTC 7466) protein is Sensor histidine protein kinase/phosphatase WalK.